The chain runs to 206 residues: Small ribosomal subunit protein uS4 (206 aa).

The region spanning 96–156 (GRLDNVVYRM…EKSKKQARIK (61 aa)) is the S4 RNA-binding domain.

The protein belongs to the universal ribosomal protein uS4 family. As to quaternary structure, part of the 30S ribosomal subunit. Contacts protein S5. The interaction surface between S4 and S5 is involved in control of translational fidelity.

Functionally, one of the primary rRNA binding proteins, it binds directly to 16S rRNA where it nucleates assembly of the body of the 30S subunit. With S5 and S12 plays an important role in translational accuracy. The chain is Small ribosomal subunit protein uS4 from Actinobacillus succinogenes (strain ATCC 55618 / DSM 22257 / CCUG 43843 / 130Z).